A 264-amino-acid polypeptide reads, in one-letter code: Glyceraldehyde-3-phosphate dehydrogenase (264 aa).

2 residues coordinate NAD(+): arginine 45 and threonine 93. D-glyceraldehyde 3-phosphate contacts are provided by residues 123-125 (SCT) and threonine 154. Cysteine 124 (nucleophile) is an active-site residue. Residue asparagine 155 coordinates NAD(+). Residues arginine 169, 182–183 (TG), and arginine 205 contribute to the D-glyceraldehyde 3-phosphate site. A disordered region spans residues 245 to 264 (GILGYTEDPXVSSDXKGNSH).

The protein belongs to the glyceraldehyde-3-phosphate dehydrogenase family. In terms of assembly, homotetramer.

It localises to the cytoplasm. It carries out the reaction D-glyceraldehyde 3-phosphate + phosphate + NAD(+) = (2R)-3-phospho-glyceroyl phosphate + NADH + H(+). Its pathway is carbohydrate degradation; glycolysis; pyruvate from D-glyceraldehyde 3-phosphate: step 1/5. In terms of biological role, catalyzes the oxidative phosphorylation of glyceraldehyde 3-phosphate (G3P) to 1,3-bisphosphoglycerate (BPG) using the cofactor NAD. The first reaction step involves the formation of a hemiacetal intermediate between G3P and a cysteine residue, and this hemiacetal intermediate is then oxidized to a thioester, with concomitant reduction of NAD to NADH. The reduced NADH is then exchanged with the second NAD, and the thioester is attacked by a nucleophilic inorganic phosphate to produce BPG. In Borrelia hermsii, this protein is Glyceraldehyde-3-phosphate dehydrogenase (gap).